A 325-amino-acid chain; its full sequence is 4-hydroxy-3-methylbut-2-enyl diphosphate reductase (325 aa).

Residue Cys-21 coordinates [4Fe-4S] cluster. 2 residues coordinate (2E)-4-hydroxy-3-methylbut-2-enyl diphosphate: His-50 and His-83. 2 residues coordinate dimethylallyl diphosphate: His-50 and His-83. 2 residues coordinate isopentenyl diphosphate: His-50 and His-83. Cys-105 is a binding site for [4Fe-4S] cluster. His-133 contributes to the (2E)-4-hydroxy-3-methylbut-2-enyl diphosphate binding site. His-133 contacts dimethylallyl diphosphate. His-133 provides a ligand contact to isopentenyl diphosphate. The Proton donor role is filled by Glu-135. Position 173 (Thr-173) interacts with (2E)-4-hydroxy-3-methylbut-2-enyl diphosphate. Cys-203 provides a ligand contact to [4Fe-4S] cluster. Residues Ser-231, Ser-232, Asn-233, and Ser-275 each coordinate (2E)-4-hydroxy-3-methylbut-2-enyl diphosphate. Dimethylallyl diphosphate contacts are provided by Ser-231, Ser-232, Asn-233, and Ser-275. Ser-231, Ser-232, Asn-233, and Ser-275 together coordinate isopentenyl diphosphate.

The protein belongs to the IspH family. Requires [4Fe-4S] cluster as cofactor.

The catalysed reaction is isopentenyl diphosphate + 2 oxidized [2Fe-2S]-[ferredoxin] + H2O = (2E)-4-hydroxy-3-methylbut-2-enyl diphosphate + 2 reduced [2Fe-2S]-[ferredoxin] + 2 H(+). It carries out the reaction dimethylallyl diphosphate + 2 oxidized [2Fe-2S]-[ferredoxin] + H2O = (2E)-4-hydroxy-3-methylbut-2-enyl diphosphate + 2 reduced [2Fe-2S]-[ferredoxin] + 2 H(+). It participates in isoprenoid biosynthesis; dimethylallyl diphosphate biosynthesis; dimethylallyl diphosphate from (2E)-4-hydroxy-3-methylbutenyl diphosphate: step 1/1. It functions in the pathway isoprenoid biosynthesis; isopentenyl diphosphate biosynthesis via DXP pathway; isopentenyl diphosphate from 1-deoxy-D-xylulose 5-phosphate: step 6/6. Its function is as follows. Catalyzes the conversion of 1-hydroxy-2-methyl-2-(E)-butenyl 4-diphosphate (HMBPP) into a mixture of isopentenyl diphosphate (IPP) and dimethylallyl diphosphate (DMAPP). Acts in the terminal step of the DOXP/MEP pathway for isoprenoid precursor biosynthesis. This is 4-hydroxy-3-methylbut-2-enyl diphosphate reductase from Bordetella pertussis (strain Tohama I / ATCC BAA-589 / NCTC 13251).